Here is a 1248-residue protein sequence, read N- to C-terminus: Period circadian protein homolog 2 (1248 aa).

The disordered stretch occupies residues 1–57 (MNGYVEFSPSPTKESVEPQPSQAVLQEDVDMSSGSSGHENCSMGRDSQGSDCDDNGK). Composition is skewed to polar residues over residues 9–24 (PSPT…SQAV) and 32–50 (SSGS…SQGS). The Nuclear export signal 1 motif lies at 105–114 (LIRTLRELKV). In terms of domain architecture, PAS 1 spans 175-242 (ITSEYIVKNA…FHSYTTPYKL (68 aa)). Positions 302-306 (LCCLL) match the LXXLL motif. One can recognise a PAS 2 domain in the interval 315–381 (YEAPRIPPEK…MLAIHKKILQ (67 aa)). A PAC domain is found at 389–432 (YSPIRFRARNGEYITLDTSWSSFINPWSRKISFIIGRHKVRVGP). The Nuclear export signal 2 motif lies at 456–465 (LTEQIHRLLM). Disordered stretches follow at residues 467-563 (PVPH…SLPK) and 619-638 (VSPG…VSSH). Residues 474–478 (SGYGS) form an important for protein stability region. Residues 506 to 706 (RKSGISKNGS…GAPGGLSQEK (201 aa)) form a CSNK1E binding domain region. Over residues 510–521 (ISKNGSKTQTRS) the composition is skewed to polar residues. Phosphoserine occurs at positions 521, 524, 527, and 540. Residues 523–534 (FSHESGEQKEIA) are compositionally biased toward basic and acidic residues. Residues Ser656, Ser690, Ser694, Ser703, and Ser755 each carry the phosphoserine modification. Disordered stretches follow at residues 675–708 (DKKP…EKGP) and 751–829 (RAQA…PSAP). Residues 773–789 (KKTGKNRKLKSKRVKTR) carry the Nuclear localization signal motif. The span at 774–787 (KTGKNRKLKSKRVK) shows a compositional bias: basic residues. A compositionally biased stretch (low complexity) spans 816–827 (SPSDTSQSSCPS). The interval 873–1058 (DFAVQPLPLA…DLCSATGSAL (186 aa)) is interaction with PPARG. A Phosphoserine modification is found at Ser930. Residues 950–971 (TPPAATVTSGRASPPLFQSRGS) are disordered. Phosphothreonine is present on Thr955. The residue at position 962 (Ser962) is a Phosphoserine. The Nuclear export signal 3 motif lies at 974–981 (LQLNLLQL). The interval 984–1035 (APEGSTGAAGTSGTTGTAAAGLDCTPGTSRDRQPKAPSTCKEPSDTQNSDAL) is disordered. The span at 987–1004 (GSTGAAGTSGTTGTAAAG) shows a compositional bias: low complexity. Residues 1042 to 1046 (LNLLL) carry the LXXLL motif. Residues 1057-1080 (ALSGSGASATSDSLGSGSLGCDAS) show a composition bias toward low complexity. Residues 1057–1113 (ALSGSGASATSDSLGSGSLGCDASRSGAGSSDTSHTSKYFGSIDSSENNHKAKVSTD) form a disordered region. Residues 1083 to 1102 (GAGSSDTSHTSKYFGSIDSS) show a composition bias toward polar residues. Basic and acidic residues predominate over residues 1103–1112 (ENNHKAKVST). Ser1117 carries the phosphoserine modification. Positions 1148 to 1248 (SRDLESVLRE…LTGPRIEAQT (101 aa)) are CRY binding domain. Positions 1215-1248 (PYEEDSPSPGLCDTSEAKEEEGEQLTGPRIEAQT) are disordered.

Homodimer. Component of the circadian core oscillator, which includes the CRY proteins, CLOCK or NPAS2, BMAL1 or BMAL2, CSNK1D and/or CSNK1E, TIMELESS, and the PER proteins. Interacts with CLOCK-BMAL1 (off DNA). Interacts with BMAL2. Interacts directly with PER1 and PER3, and through a C-terminal domain, with CRY1 and CRY2. Interacts (via PAS 2 domain) with TIMELESS. Interacts with NFIL3. Different large complexes have been identified with different repressive functions. The core of PER complexes is composed of at least PER1, PER2, PER3, CRY1, CRY2, CSNK1D and/or CSNK1E. The large PER complex involved in the repression of transcriptional termination is composed of at least PER2, CDK9, DDX5, DHX9, NCBP1 and POLR2A (active). The large PER complex involved in the histone deacetylation is composed of at least HDAC1, PER2, SFPQ and SIN3A. The large PER complex involved in the histone methylation is composed of at least PER2, CBX3, TRIM28, SUV39H1 and/or SUV39H2; CBX3 mediates the formation of the complex. Interacts with SETX; the interaction inhibits termination of circadian target genes. Interacts with the nuclear receptors HNF4A, NR1D1, NR4A2, RORA, PPARA, PPARG and THRA; the interaction with at least PPARG is ligand dependent. Interacts with PML. Interacts (phosphorylated) with BTRC and FBXW11; the interactions trigger proteasomal degradation. Interacts with NONO and SFPQ. Interacts with PRKCDBP. Interacts with MAGEL2. Interacts with MAP1LC3B. Interacts with HNF4A. In terms of processing, acetylated. Deacetylated by SIRT1, resulting in decreased protein stability. Deacetylated by SIRT6, preventing its degradation by the proteasome, resulting in increased protein stability. Phosphorylated by CSNK1E and CSNK1D. Phosphorylation results in PER2 protein degradation. May be dephosphorylated by PP1. Post-translationally, ubiquitinated, leading to its proteasomal degradation. Ubiquitination may be inhibited by CRY1. Expressed in the brain, mainly in the suprachiasmatic nucleus (SCN). Expression also found in the harderian gland, lung, eye, intestine, liver and skeletal muscle.

Its subcellular location is the nucleus. It is found in the cytoplasm. The protein localises to the perinuclear region. Transcriptional repressor which forms a core component of the circadian clock. The circadian clock, an internal time-keeping system, regulates various physiological processes through the generation of approximately 24 hour circadian rhythms in gene expression, which are translated into rhythms in metabolism and behavior. It is derived from the Latin roots 'circa' (about) and 'diem' (day) and acts as an important regulator of a wide array of physiological functions including metabolism, sleep, body temperature, blood pressure, endocrine, immune, cardiovascular, and renal function. Consists of two major components: the central clock, residing in the suprachiasmatic nucleus (SCN) of the brain, and the peripheral clocks that are present in nearly every tissue and organ system. Both the central and peripheral clocks can be reset by environmental cues, also known as Zeitgebers (German for 'timegivers'). The predominant Zeitgeber for the central clock is light, which is sensed by retina and signals directly to the SCN. The central clock entrains the peripheral clocks through neuronal and hormonal signals, body temperature and feeding-related cues, aligning all clocks with the external light/dark cycle. Circadian rhythms allow an organism to achieve temporal homeostasis with its environment at the molecular level by regulating gene expression to create a peak of protein expression once every 24 hours to control when a particular physiological process is most active with respect to the solar day. Transcription and translation of core clock components (CLOCK, NPAS2, BMAL1, BMAL2, PER1, PER2, PER3, CRY1 and CRY2) plays a critical role in rhythm generation, whereas delays imposed by post-translational modifications (PTMs) are important for determining the period (tau) of the rhythms (tau refers to the period of a rhythm and is the length, in time, of one complete cycle). A diurnal rhythm is synchronized with the day/night cycle, while the ultradian and infradian rhythms have a period shorter and longer than 24 hours, respectively. Disruptions in the circadian rhythms contribute to the pathology of cardiovascular diseases, cancer, metabolic syndrome and aging. A transcription/translation feedback loop (TTFL) forms the core of the molecular circadian clock mechanism. Transcription factors, CLOCK or NPAS2 and BMAL1 or BMAL2, form the positive limb of the feedback loop, act in the form of a heterodimer and activate the transcription of core clock genes and clock-controlled genes (involved in key metabolic processes), harboring E-box elements (5'-CACGTG-3') within their promoters. The core clock genes: PER1/2/3 and CRY1/2 which are transcriptional repressors form the negative limb of the feedback loop and interact with the CLOCK|NPAS2-BMAL1|BMAL2 heterodimer inhibiting its activity and thereby negatively regulating their own expression. This heterodimer also activates nuclear receptors NR1D1/2 and RORA/B/G, which form a second feedback loop and which activate and repress BMAL1 transcription, respectively. PER1 and PER2 proteins transport CRY1 and CRY2 into the nucleus with appropriate circadian timing, but also contribute directly to repression of clock-controlled target genes through interaction with several classes of RNA-binding proteins, helicases and others transcriptional repressors. PER appears to regulate circadian control of transcription by at least three different modes. First, interacts directly with the CLOCK-BMAL1 at the tail end of the nascent transcript peak to recruit complexes containing the SIN3-HDAC that remodel chromatin to repress transcription. Second, brings H3K9 methyltransferases such as SUV39H1 and SUV39H2 to the E-box elements of the circadian target genes, like PER2 itself or PER1. The recruitment of each repressive modifier to the DNA seems to be very precisely temporally orchestrated by the large PER complex, the deacetylases acting before than the methyltransferases. Additionally, large PER complexes are also recruited to the target genes 3' termination site through interactions with RNA-binding proteins and helicases that may play a role in transcription termination to regulate transcription independently of CLOCK-BMAL1 interactions. Recruitment of large PER complexes to the elongating polymerase at PER and CRY termination sites inhibited SETX action, impeding RNA polymerase II release and thereby repressing transcriptional reinitiation. May propagate clock information to metabolic pathways via the interaction with nuclear receptors. Coactivator of PPARA and corepressor of NR1D1, binds rhythmically at the promoter of nuclear receptors target genes like BMAL1 or G6PC1. Directly and specifically represses PPARG proadipogenic activity by blocking PPARG recruitment to target promoters and thereby transcriptional activation. Required for fatty acid and lipid metabolism, is involved as well in the regulation of circulating insulin levels. Plays an important role in the maintenance of cardiovascular functions through the regulation of NO and vasodilatatory prostaglandins production in aortas. Controls circadian glutamate uptake in synaptic vesicles through the regulation of VGLUT1 expression. May also be involved in the regulation of inflammatory processes. Represses the CLOCK-BMAL1 induced transcription of BHLHE40/DEC1 and ATF4. Negatively regulates the formation of the TIMELESS-CRY1 complex by competing with TIMELESS for binding to CRY1. This chain is Period circadian protein homolog 2 (PER2), found in Spalax judaei (Judean Mountains blind mole rat).